The following is a 167-amino-acid chain: Small ribosomal subunit protein uS5 (167 aa).

Residues 11-74 form the S5 DRBM domain; that stretch reads LQEKLIAVNR…EKARRNMINV (64 aa).

The protein belongs to the universal ribosomal protein uS5 family. Part of the 30S ribosomal subunit. Contacts proteins S4 and S8.

Functionally, with S4 and S12 plays an important role in translational accuracy. Its function is as follows. Located at the back of the 30S subunit body where it stabilizes the conformation of the head with respect to the body. This chain is Small ribosomal subunit protein uS5, found in Escherichia coli O139:H28 (strain E24377A / ETEC).